The following is a 1188-amino-acid chain: DNA-directed RNA polymerase subunit beta (1188 aa).

Positions 1149-1188 (ELRDLDEGEDDDVMHVDDLEKAREKQAQETPEVSENSEEK) are disordered. Residues 1161–1175 (VMHVDDLEKAREKQA) are compositionally biased toward basic and acidic residues.

The protein belongs to the RNA polymerase beta chain family. As to quaternary structure, the RNAP catalytic core consists of 2 alpha, 1 beta, 1 beta' and 1 omega subunit. When a sigma factor is associated with the core the holoenzyme is formed, which can initiate transcription.

It catalyses the reaction RNA(n) + a ribonucleoside 5'-triphosphate = RNA(n+1) + diphosphate. DNA-dependent RNA polymerase catalyzes the transcription of DNA into RNA using the four ribonucleoside triphosphates as substrates. The chain is DNA-directed RNA polymerase subunit beta from Streptococcus uberis (strain ATCC BAA-854 / 0140J).